The primary structure comprises 281 residues: 2-dehydro-3-deoxyphosphooctonate aldolase (281 aa).

It belongs to the KdsA family.

The protein localises to the cytoplasm. The catalysed reaction is D-arabinose 5-phosphate + phosphoenolpyruvate + H2O = 3-deoxy-alpha-D-manno-2-octulosonate-8-phosphate + phosphate. It participates in carbohydrate biosynthesis; 3-deoxy-D-manno-octulosonate biosynthesis; 3-deoxy-D-manno-octulosonate from D-ribulose 5-phosphate: step 2/3. It functions in the pathway bacterial outer membrane biogenesis; lipopolysaccharide biosynthesis. The protein is 2-dehydro-3-deoxyphosphooctonate aldolase of Pseudomonas syringae pv. syringae (strain B728a).